The chain runs to 1062 residues: Histone H3-lysine(4) N-trimethyltransferase ATX1 (1062 aa).

Residues 159-184 (NAFSGNKQNGSSRRKGSSSKNQDKAT) form a disordered region. The PWWP domain maps to 301–365 (PGDIVWAKLA…VKQAISFIKG (65 aa)). The interval 401 to 424 (QLQKGADSVDSDMANSTEEGNSGG) is disordered. One can recognise an FYR N-terminal domain in the interval 441-500 (DFRHIIGDLLIINLGKVVTDSQFFKDENHIWPEGYTAMRKFTSLTDHSASALYKMEVLRD). Positions 504–586 (KTHPLFIVTA…RPSSHVSMCK (83 aa)) constitute an FYR C-terminal domain. A Phorbol-ester/DAG-type zinc finger spans residues 591 to 647 (RHQNQPTGYRPVRVDWKDLDKCNVCHMDEEYENNLFLQCDKCRMMVHAKCYGELEPC). An interaction with PIP5 region spans residues 599–1062 (YRPVRVDWKD…RCDLIDWTAE (464 aa)). The PHD-type 1 zinc-finger motif lies at 609-660 (LDKCNVCHMDEEYENNLFLQCDKCRMMVHAKCYGELEPCDGALWLCNLCRPG). A C2HC pre-PHD-type zinc finger spans residues 665 to 698 (PPRCCLCPVVGGAMKPTTDGRWAHLACAIWIPET). The PHD-type 2 zinc-finger motif lies at 722–785 (LMCTICGVSY…RMLSFCKRHR (64 aa)). The 119-residue stretch at 898–1016 (KRLAFGKSGI…KWEELTYDYR (119 aa)) folds into the SET domain. His-908 is an S-adenosyl-L-methionine binding site. An O-linked (GlcNAc) serine glycan is attached at Ser-947. Residues Tyr-954 and 977-978 (NH) contribute to the S-adenosyl-L-methionine site. Cys-980, Cys-1026, Cys-1028, and Cys-1033 together coordinate Zn(2+). The Post-SET domain maps to 1022 to 1038 (ERLSCSCGFPGCRGVVN).

Belongs to the class V-like SAM-binding methyltransferase superfamily. Histone-lysine methyltransferase family. TRX/MLL subfamily. Interacts with PIP5. Interacts with WDR5A. Binds to CLF in the nucleus. Interacts with NRPB1 CTD domain, especially when NRPB1 is phosphorylated on 'Ser-5' of the heptapeptide repeat. Component of a nuclear protein complex containing at least TATA binding proteins (TBPs, e.g. TBP1 and TBP2) and ATX1. Associates with ULT1 for trimethylating 'Lys-4' on histone H3 (H3K4me3) at flower MADS box gene loci. Interacts with SEC. As to quaternary structure, interacts with A4/EF1A in the cytoplasm on the nuclear periphery. Post-translationally, activated via O-glycosylation by SEC; this modification triggers FLC locus H3K4me3 histone modification, thus preventing premature flowering. In terms of tissue distribution, strongly expressed in cotyledons, but weak levels in the first true leaves, except at the hydothodes. Ubiquitous with higher levels in dividing tissues, including inflorescence meristem and flower primordia. Expressed also in leaves (especially at hydathodes), in growing inflorescence stems and in the mature flowers. Strongly expressed in young seedlings.

Its subcellular location is the nucleus. The protein localises to the cytoplasm. It localises to the perinuclear region. It carries out the reaction L-lysyl(4)-[histone H3] + 3 S-adenosyl-L-methionine = N(6),N(6),N(6)-trimethyl-L-lysyl(4)-[histone H3] + 3 S-adenosyl-L-homocysteine + 3 H(+). The catalysed reaction is L-lysyl-[protein] + 3 S-adenosyl-L-methionine = N(6),N(6),N(6)-trimethyl-L-lysyl-[protein] + 3 S-adenosyl-L-homocysteine + 3 H(+). Binds to the promoter and regulates the transcription of target genes, maintaining them in an active state; at promoters, required for TATA binding proteins (TBPs, e.g. TBP1 and TBP2) and RNA polymerase II (Pol II) recruitment, and, in a subsequent event, is recruited by a phosphorylated form of Pol II to the +300-bp region of transcribed sequences to trimethylates nucleosomes. Histone trimethyltransferase that trimethylates 'Lys-4' of histone H3 (H3K4me3); H3 'Lys-4' methylation represents a specific tag for epigenetic transcriptional activation and is required for efficient elongation of transcription but not for transcription initiation. Methylates only a limited fraction of nucleosomes of target genes (e.g. FLC, NAP, XTH33 and WRKY70). Necessary for WDR5A occupancy at WRKY70 and LTP7 genes. Required to maintain the active state of class A (AP1 and AP2), class B (PI and AP3) and class C (AG, AGAMOUS) floral homeotic genes at early stages of flower development. Together with CLF, modulates AG nucleosome methylation statement. Involved in epigenetic regulation (e.g. H3K4me3) of the floral repressors FLC, FT and SOC1 to prevent the transition from vegetative to reproductive development, independently of the photoperiod; binds the active FLC locus before flowering, but this interaction is released upon the transition to flowering. Regulates floral organ identity and flowering transition. Functions as a receptor for the lipid messenger phosphatidylinositol 5-phosphate (PI5P), which negatively regulates its transcriptional activation activity. Exhibits histone methylase activity and subsequent transcriptional regulation on WRKY70 gene, and, to a lower extent on secondary defense-response targets salicylic acid (SA)-responsive gene PR1 and jasmonic acid (JA)-responsive gene THI2.1. Involved in response to dehydration stress-response in both abscisic acid (ABA)-dependent and ABA-independent pathways; this includes specific genes (e.g. COR15A, ADH1, CBF4, RD29A, RD29B, RD26, ABF3, NCED3 and ABA3) epigenetic regulation (e.g. H3K4me3 and Pol II recruitment) to promote their transcription and influence ABA production. Implicated in stomatal closure regulation. Indirect repressor of XTH genes (XTH33). Necessary for the phosphorylation of Pol II NRPB1 (e.g. Ser5P and Ser2P) at the promoters of target genes, thus regulating both early and late stages of transcription. Controls root growth and architecture by regulating the timing of root development, stem cell niche maintenance (e.g. quiescent center (QC)), and cell patterning during primary and lateral root development. Modulates cell cycle duration, cell production, and the transition from cell proliferation in the root apical meristem (RAM) to cell elongation. Its function is as follows. Trimethylates A4/EF1A post-translationally at Lys-396. Required for actin cytoskeleton organization. The polypeptide is Histone H3-lysine(4) N-trimethyltransferase ATX1 (Arabidopsis thaliana (Mouse-ear cress)).